We begin with the raw amino-acid sequence, 298 residues long: Apolipoprotein E (298 aa).

Positions 1–18 are cleaved as a signal peptide; it reads MKVLWAALVVTLLAGCQA. 6 repeat units span residues 74-95, 96-117, 118-139, 140-161, 162-183, and 223-244. The interval 74 to 244 is 8 X 22 AA approximate tandem repeats; that stretch reads LLMEDTMKEV…RLEEVREQME (171 aa). Met-137 bears the Methionine sulfoxide mark. Residue Ser-141 is modified to Phosphoserine. Residues 152–162 are LDL and other lipoprotein receptors binding; the sequence is HLRKLRKRLLR. Residue 156–159 participates in heparin binding; that stretch reads LRKR. The segment at 204-272 is lipid-binding and lipoprotein association; that stretch reads SLPSQPLRER…SWFEPMMEDM (69 aa). 218–225 contributes to the heparin binding site; the sequence is GEQMRGRL. Positions 260 to 272 are specificity for association with VLDL; that stretch reads RFKSWFEPMMEDM.

Belongs to the apolipoprotein A1/A4/E family. Homotetramer. May interact with ABCA1; functionally associated with ABCA1 in the biogenesis of HDLs. May interact with APP/A4 amyloid-beta peptide; the interaction is extremely stable in vitro but its physiological significance is unclear. May interact with MAPT. May interact with MAP2. In the cerebrospinal fluid, interacts with secreted SORL1. Interacts with PMEL; this allows the loading of PMEL luminal fragment on ILVs to induce fibril nucleation. In terms of processing, APOE exists as multiple glycosylated and sialylated glycoforms within cells and in plasma. The extent of glycosylation and sialylation are tissue and context specific. Glycated in plasma VLDL. Post-translationally, phosphorylated by FAM20C in the extracellular medium.

Its subcellular location is the secreted. It is found in the extracellular space. It localises to the extracellular matrix. The protein localises to the extracellular vesicle. The protein resides in the endosome. Its subcellular location is the multivesicular body. APOE is an apolipoprotein, a protein associating with lipid particles, that mainly functions in lipoprotein-mediated lipid transport between organs via the plasma and interstitial fluids. APOE is a core component of plasma lipoproteins and is involved in their production, conversion and clearance. Apolipoproteins are amphipathic molecules that interact both with lipids of the lipoprotein particle core and the aqueous environment of the plasma. As such, APOE associates with chylomicrons, chylomicron remnants, very low density lipoproteins (VLDL) and intermediate density lipoproteins (IDL) but shows a preferential binding to high-density lipoproteins (HDL). It also binds a wide range of cellular receptors including the LDL receptor/LDLR, the LDL receptor-related proteins LRP1, LRP2 and LRP8 and the very low-density lipoprotein receptor/VLDLR that mediate the cellular uptake of the APOE-containing lipoprotein particles. Finally, APOE also has a heparin-binding activity and binds heparan-sulfate proteoglycans on the surface of cells, a property that supports the capture and the receptor-mediated uptake of APOE-containing lipoproteins by cells. A main function of APOE is to mediate lipoprotein clearance through the uptake of chylomicrons, VLDLs, and HDLs by hepatocytes. APOE is also involved in the biosynthesis by the liver of VLDLs as well as their uptake by peripheral tissues ensuring the delivery of triglycerides and energy storage in muscle, heart and adipose tissues. By participating in the lipoprotein-mediated distribution of lipids among tissues, APOE plays a critical role in plasma and tissues lipid homeostasis. APOE is also involved in two steps of reverse cholesterol transport, the HDLs-mediated transport of cholesterol from peripheral tissues to the liver, and thereby plays an important role in cholesterol homeostasis. First, it is functionally associated with ABCA1 in the biogenesis of HDLs in tissues. Second, it is enriched in circulating HDLs and mediates their uptake by hepatocytes. APOE also plays an important role in lipid transport in the central nervous system, regulating neuron survival and sprouting. The chain is Apolipoprotein E (APOE) from Dasyprocta punctata (Central American agouti).